The primary structure comprises 451 residues: Chromosomal replication initiator protein DnaA (451 aa).

Residues 1–82 are domain I, interacts with DnaA modulators; it reads MENSLWKQCL…RLELQIGSSA (82 aa). The tract at residues 82–114 is domain II; it reads AVVAPPRRRQVSVTTPSPSAAADQTPATRSAAS. Residues 85 to 112 form a disordered region; sequence APPRRRQVSVTTPSPSAAADQTPATRSA. Positions 115-331 are domain III, AAA+ region; it reads NLNSNFTFDT…GALRRVVANA (217 aa). Residues glycine 159, glycine 161, lysine 162, and threonine 163 each contribute to the ATP site. The interval 332–451 is domain IV, binds dsDNA; sequence QFTGQEITVE…YSNLLRTLST (120 aa).

It belongs to the DnaA family. Oligomerizes as a right-handed, spiral filament on DNA at oriC.

The protein resides in the cytoplasm. Plays an essential role in the initiation and regulation of chromosomal replication. ATP-DnaA binds to the origin of replication (oriC) to initiate formation of the DNA replication initiation complex once per cell cycle. Binds the DnaA box (a 9 base pair repeat at the origin) and separates the double-stranded (ds)DNA. Forms a right-handed helical filament on oriC DNA; dsDNA binds to the exterior of the filament while single-stranded (ss)DNA is stabiized in the filament's interior. The ATP-DnaA-oriC complex binds and stabilizes one strand of the AT-rich DNA unwinding element (DUE), permitting loading of DNA polymerase. After initiation quickly degrades to an ADP-DnaA complex that is not apt for DNA replication. Binds acidic phospholipids. The protein is Chromosomal replication initiator protein DnaA of Alkalilimnicola ehrlichii (strain ATCC BAA-1101 / DSM 17681 / MLHE-1).